The chain runs to 456 residues: Hydroxyproline dehydrogenase (456 aa).

2 positions are modified to N6-acetyllysine: lysine 310 and lysine 320.

It belongs to the proline oxidase family. The cofactor is FAD.

The catalysed reaction is trans-4-hydroxy-L-proline + a quinone = (3R,5S)-1-pyrroline-3-hydroxy-5-carboxylate + a quinol + H(+). The enzyme catalyses L-proline + a quinone = (S)-1-pyrroline-5-carboxylate + a quinol + H(+). Functionally, dehydrogenase that converts trans-4-L-hydroxyproline to delta-1-pyrroline-3-hydroxy-5-carboxylate (Hyp) using ubiquinone-10 as the terminal electron acceptor. Can also use proline as a substrate but with a very much lower efficiency. Does not react with other diastereomers of Hyp: trans-4-D-hydroxyproline and cis-4-L-hydroxyproline. Ubiquininone analogs such as menadione, duroquinone and ubiquinone-1 react more efficiently than oxygen as the terminal electron acceptor during catalysis. The protein is Hydroxyproline dehydrogenase of Rattus norvegicus (Rat).